The sequence spans 73 residues: Small ribosomal subunit protein uS15c (73 aa).

It belongs to the universal ribosomal protein uS15 family. Part of the 30S ribosomal subunit.

Its subcellular location is the plastid. The protein localises to the chloroplast. The polypeptide is Small ribosomal subunit protein uS15c (rps15) (Welwitschia mirabilis (Tree tumbo)).